The chain runs to 372 residues: Saccharopine dehydrogenase [NAD(+), L-lysine-forming] (372 aa).

L-saccharopine-binding residues include Arg17 and Lys76. Lys76 serves as the catalytic Proton acceptor. The active-site Proton donor is the His95. An L-saccharopine-binding site is contributed by Gln100. Residue Arg129 coordinates NAD(+). Positions 130 and 134 each coordinate L-saccharopine. Residues 202 to 203 (GR), Asp226, Thr230, Tyr250, and Val277 contribute to the NAD(+) site. Cys204 and Cys248 are disulfide-bonded. 278–280 (SAD) serves as a coordination point for L-saccharopine. Residue 317 to 320 (IDHL) participates in NAD(+) binding. Residues 370–372 (SKL) carry the Microbody targeting signal motif.

It belongs to the AlaDH/PNT family. As to quaternary structure, monomer.

It localises to the peroxisome. It carries out the reaction L-saccharopine + NAD(+) + H2O = L-lysine + 2-oxoglutarate + NADH + H(+). It participates in amino-acid biosynthesis; L-lysine biosynthesis via AAA pathway; L-lysine from L-alpha-aminoadipate (fungal route): step 3/3. Its function is as follows. Catalyzes the NAD(+)-dependent cleavage of saccharopine to L-lysine and 2-oxoglutarate, the final step in the alpha-aminoadipate (AAA) pathway for lysin biosynthesis. In Candida glabrata (strain ATCC 2001 / BCRC 20586 / JCM 3761 / NBRC 0622 / NRRL Y-65 / CBS 138) (Yeast), this protein is Saccharopine dehydrogenase [NAD(+), L-lysine-forming] (LYS1).